Here is a 355-residue protein sequence, read N- to C-terminus: Methylxanthine N3-demethylase NdmB (355 aa).

One can recognise a Rieske domain in the interval 19–131; that stretch reads WHPVCTLNEF…CEVKYDIVWV (113 aa). 4 residues coordinate [2Fe-2S] cluster: C64, H66, C87, and H90.

It depends on [2Fe-2S] cluster as a cofactor.

The enzyme catalyses theobromine + NADH + O2 + H(+) = 7-methylxanthine + formaldehyde + NAD(+) + H2O. It catalyses the reaction theobromine + NADPH + O2 + H(+) = 7-methylxanthine + formaldehyde + NADP(+) + H2O. It carries out the reaction 3-methylxanthine + NADH + O2 + H(+) = xanthine + formaldehyde + NAD(+) + H2O. The catalysed reaction is 3-methylxanthine + NADPH + O2 + H(+) = xanthine + formaldehyde + NADP(+) + H2O. Functionally, involved in the caffeine degradation, which is the essential first step for assimilating the carbon and nitrogen in caffeine. Catalyzes the N3-demethylation of theobromine to produce 7-methylxanthine and formaldehyde. Also catalyzes the N3-demethylation of 3-methylxanthine, caffeine, and theophylline to xanthine, paraxanthine, and 1-methylxanthine, respectively. NADH is the preferred substrate. In Pseudomonas putida (Arthrobacter siderocapsulatus), this protein is Methylxanthine N3-demethylase NdmB (ndmB).